A 395-amino-acid chain; its full sequence is G-protein coupled receptor 182 (395 aa).

The Extracellular portion of the chain corresponds to 1-53 (MSVIPSSRPVSTLAPDNDFREIHNWTELLHLFNQTFSDCHMELNENTKQVVLF). N24 and N33 each carry an N-linked (GlcNAc...) asparagine glycan. A helical membrane pass occupies residues 54 to 75 (VFYLAIFVVGLVENVLVICVNC). The Cytoplasmic segment spans residues 76–86 (RRSGRVGMLNL). Residues 87–109 (YILNMAVADLGIILSLPVWMLEV) form a helical membrane-spanning segment. Over 110–123 (MLEYTWLWGSFSCR) the chain is Extracellular. C122 and C198 are joined by a disulfide. A helical transmembrane segment spans residues 124–145 (FIHYFYLANMYSSIFFLTCLSI). Residues 146–166 (DRYVTLTNTSPSWQRHQHRIR) are Cytoplasmic-facing. A helical membrane pass occupies residues 167-189 (RAVCAGVWVLSAIIPLPEVVHIQ). The Extracellular segment spans residues 190–213 (LLDGSEPMCLFLAPFETYSAWALA). Residues 214–235 (VALSATILGFLLPFPLIAVFNI) form a helical membrane-spanning segment. The Cytoplasmic portion of the chain corresponds to 236–254 (LSACRLRRQGQTESRRHCL). A helical transmembrane segment spans residues 255–276 (LMWAYIVVFVICWLPYHVTMLL). Residues 277–295 (LTLHTTHIFLHCNLVNFLY) are Extracellular-facing. Residues 296 to 316 (FFYEIIDCFSMLHCVANPILY) form a helical membrane-spanning segment. Residues 317 to 395 (NFLSPSFRGR…RTPHLHSAIP (79 aa)) are Cytoplasmic-facing. S329 bears the Phosphoserine mark.

This sequence belongs to the G-protein coupled receptor 1 family. Expressed in a wide variety of peripheral tissues in the adult rat with prominent expression in lung, testis, adrenal and liver.

The protein localises to the cell membrane. Functionally, orphan receptor. The chain is G-protein coupled receptor 182 (Gpr182) from Rattus norvegicus (Rat).